A 435-amino-acid chain; its full sequence is Probable alpha-galactosidase B (435 aa).

The N-terminal stretch at 1-18 is a signal peptide; that stretch reads MLTSLSLTALALLPSANA. Cys41 and Cys73 form a disulfide bridge. The N-linked (GlcNAc...) asparagine glycan is linked to Asn81. Cys123 and Cys153 are joined by a disulfide. Asp151 acts as the Nucleophile in catalysis. 2 N-linked (GlcNAc...) asparagine glycosylation sites follow: Asn158 and Asn176. 221-225 lines the substrate pocket; the sequence is DWGQA. Asn232 carries an N-linked (GlcNAc...) asparagine glycan. Residue Asp243 is the Proton donor of the active site. N-linked (GlcNAc...) asparagine glycosylation is present at Asn378.

The protein belongs to the glycosyl hydrolase 27 family.

The protein resides in the secreted. The enzyme catalyses Hydrolysis of terminal, non-reducing alpha-D-galactose residues in alpha-D-galactosides, including galactose oligosaccharides, galactomannans and galactolipids.. Its function is as follows. Hydrolyzes a variety of simple alpha-D-galactoside as well as more complex molecules such as oligosaccharides and polysaccharides. This is Probable alpha-galactosidase B (agl1) from Penicillium simplicissimum.